We begin with the raw amino-acid sequence, 349 residues long: D-alanine--D-alanine ligase (349 aa).

An ATP-grasp domain is found at 132 to 335 (KHVFEAVGVP…YSDLIEKLVD (204 aa)). 162 to 217 (VEKLEFPVFVKPANMGSSVGISKVDDLADLQPALSEAYKYDNRVVIEQGVDAREIE) contacts ATP. D289, E302, and N304 together coordinate Mg(2+).

It belongs to the D-alanine--D-alanine ligase family. Requires Mg(2+) as cofactor. Mn(2+) is required as a cofactor.

Its subcellular location is the cytoplasm. The enzyme catalyses 2 D-alanine + ATP = D-alanyl-D-alanine + ADP + phosphate + H(+). It participates in cell wall biogenesis; peptidoglycan biosynthesis. In terms of biological role, cell wall formation. The sequence is that of D-alanine--D-alanine ligase from Lactococcus lactis subsp. cremoris (strain SK11).